We begin with the raw amino-acid sequence, 739 residues long: Double-strand break repair protein mus-23 (739 aa).

The Mn(2+) site is built by D16, H18, D56, and N123. The active-site Proton donor is the H124. Residues H212, H240, and H242 each coordinate Mn(2+). Positions 516-739 are disordered; sequence FDAGQHKQAQ…KPGLLARRLG (224 aa). Over residues 523–532 the composition is skewed to basic residues; the sequence is QAQRTKRFKR. Residues 559 to 568 show a composition bias toward basic and acidic residues; sequence VEPKGNDRPT. Over residues 599 to 636 the composition is skewed to low complexity; sequence KRGAAAKTTAAAKKAAPGKKAAPAKKAAPAKKAAPAKK. Residues 637-646 show a composition bias toward basic residues; it reads APARGRKKKT. The span at 650 to 686 shows a compositional bias: acidic residues; it reads DSDEEEEEDYPEDDDEEEEEADEEEEDVIMEDDEEDP. Residues 694 to 722 are compositionally biased toward low complexity; that stretch reads KATSRVASTRASARATPVRATPARATQAR.

This sequence belongs to the MRE11/RAD32 family. As to quaternary structure, component of the MRN complex composed of two heterodimers RAD50 and MRE11 associated with a single NBS1. It depends on Mn(2+) as a cofactor.

It is found in the nucleus. Its subcellular location is the chromosome. The protein localises to the telomere. Its function is as follows. Core component of the MRN complex, which plays a central role in double-strand break (DSB) repair, DNA recombination, maintenance of telomere integrity and meiosis. The MRN complex is involved in the repair of DNA double-strand breaks (DSBs) via homologous recombination (HR), an error-free mechanism which primarily occurs during S and G2 phases. The complex (1) mediates the end resection of damaged DNA, which generates proper single-stranded DNA, a key initial steps in HR, and is (2) required for the recruitment of other repair factors and efficient activation of ATM and ATR upon DNA damage. Within the MRN complex, MRE11 possesses both single-strand endonuclease activity and double-strand-specific 3'-5' exonuclease activity. MRE11 first endonucleolytically cleaves the 5' strand at DNA DSB ends to prevent non-homologous end joining (NHEJ) and licence HR. It then generates a single-stranded DNA gap via 3' to 5' exonucleolytic degradation, which is required for single-strand invasion and recombination. The MRN complex is also required for the processing of R-loops. The chain is Double-strand break repair protein mus-23 (mus-23) from Neurospora crassa (strain ATCC 24698 / 74-OR23-1A / CBS 708.71 / DSM 1257 / FGSC 987).